A 391-amino-acid polypeptide reads, in one-letter code: Enoyl-CoA delta isomerase 2 (391 aa).

Residues 1-36 constitute a mitochondrion transit peptide; that stretch reads MAAVTWSRARCWCPSLLQVLRLPVTKLHLGRPAMRA. In terms of domain architecture, ACB spans 37-122; sequence TQQDFENAMN…VSSLSSSSEA (86 aa). Residue Lys49 is modified to N6-acetyllysine; alternate. Lys49 carries the post-translational modification N6-succinyllysine; alternate. Position 53 is an N6-succinyllysine (Lys53). Lys60 bears the N6-acetyllysine; alternate mark. Lys60 is subject to N6-succinyllysine; alternate. 64-68 provides a ligand contact to an acyl-CoA; it reads YALYK. 3 positions are modified to N6-succinyllysine: Lys68, Lys79, and Lys88. Lys90 bears the N6-acetyllysine; alternate mark. At Lys90 the chain carries N6-succinyllysine; alternate. Lys90 is a binding site for an acyl-CoA. A Phosphoserine modification is found at Ser99. Tyr109 provides a ligand contact to an acyl-CoA. Ser117 bears the Phosphoserine mark. Lys127 and Lys159 each carry N6-succinyllysine. Residues 149-319 are ECH-like; it reads TKITFNRPSK…AQGLVTEVFP (171 aa). Substrate is bound at residue 196–200; it reads SGNDL. Lys286 is subject to N6-succinyllysine. The short motif at 389-391 is the Microbody targeting signal element; it reads PKL.

The protein in the C-terminal section; belongs to the enoyl-CoA hydratase/isomerase family. Liver (at protein level).

The protein resides in the peroxisome matrix. Its subcellular location is the mitochondrion. It carries out the reaction a (3Z)-enoyl-CoA = a 4-saturated (2E)-enoyl-CoA. The catalysed reaction is a (3E)-enoyl-CoA = a 4-saturated (2E)-enoyl-CoA. The enzyme catalyses (2E)-tetradecenoyl-CoA = (3Z)-tetradecenoyl-CoA. It catalyses the reaction (3E)-tetradecenoyl-CoA = (2E)-tetradecenoyl-CoA. It carries out the reaction (3E)-octenoyl-CoA = (2E)-octenoyl-CoA. The catalysed reaction is (3Z)-octenoyl-CoA = (2E)-octenoyl-CoA. The enzyme catalyses (3E)-nonenoyl-CoA = (2E)-nonenoyl-CoA. It participates in lipid metabolism; fatty acid beta-oxidation. Able to isomerize both 3-cis and 3-trans double bonds into the 2-trans form in a range of enoyl-CoA species. Has a preference for 3-trans substrates. This is Enoyl-CoA delta isomerase 2 from Rattus norvegicus (Rat).